Consider the following 348-residue polypeptide: Protein RecA (348 aa).

Residue 71-78 participates in ATP binding; the sequence is GVESSGKT.

The protein belongs to the RecA family.

The protein resides in the cytoplasm. Can catalyze the hydrolysis of ATP in the presence of single-stranded DNA, the ATP-dependent uptake of single-stranded DNA by duplex DNA, and the ATP-dependent hybridization of homologous single-stranded DNAs. It interacts with LexA causing its activation and leading to its autocatalytic cleavage. This chain is Protein RecA, found in Aquifex pyrophilus.